The chain runs to 482 residues: Replication factor C large subunit (482 aa).

46–53 (GPPGSGKT) provides a ligand contact to ATP. The tract at residues 420-482 (EKETPKKKKK…KKQATLDSFF (63 aa)) is disordered. Over residues 442-476 (KISEPPKEPLKEVIEETVEKTDKKEKEKKDPKKQA) the composition is skewed to basic and acidic residues.

Belongs to the activator 1 small subunits family. RfcL subfamily. Heteromultimer composed of small subunits (RfcS) and large subunits (RfcL).

Part of the RFC clamp loader complex which loads the PCNA sliding clamp onto DNA. The polypeptide is Replication factor C large subunit (Methanococcus maripaludis (strain C7 / ATCC BAA-1331)).